The primary structure comprises 132 residues: UPF0299 membrane protein YohJ (132 aa).

The next 4 helical transmembrane spans lie at 7 to 27 (IIWQYLRAFVLIYACLYAGIF), 31 to 51 (LLPVTIPGSIIGMLILFVLLA), 63 to 83 (GCYVLIRYMALLFVPIGVGVM), and 93 to 113 (FGPVVVSCAISTLVVFLVMSW).

The protein belongs to the UPF0299 family.

It localises to the cell inner membrane. This is UPF0299 membrane protein YohJ from Shigella dysenteriae serotype 1 (strain Sd197).